The following is a 270-amino-acid chain: Putative phosphoenolpyruvate synthase regulatory protein (270 aa).

Residue 150-157 (GVSRCGKT) participates in ADP binding.

It belongs to the pyruvate, phosphate/water dikinase regulatory protein family. PSRP subfamily.

It carries out the reaction [pyruvate, water dikinase] + ADP = [pyruvate, water dikinase]-phosphate + AMP + H(+). It catalyses the reaction [pyruvate, water dikinase]-phosphate + phosphate + H(+) = [pyruvate, water dikinase] + diphosphate. Its function is as follows. Bifunctional serine/threonine kinase and phosphorylase involved in the regulation of the phosphoenolpyruvate synthase (PEPS) by catalyzing its phosphorylation/dephosphorylation. The sequence is that of Putative phosphoenolpyruvate synthase regulatory protein from Shewanella piezotolerans (strain WP3 / JCM 13877).